Consider the following 699-residue polypeptide: Glycine--tRNA ligase beta subunit (699 aa).

Belongs to the class-II aminoacyl-tRNA synthetase family. In terms of assembly, tetramer of two alpha and two beta subunits.

The protein localises to the cytoplasm. It catalyses the reaction tRNA(Gly) + glycine + ATP = glycyl-tRNA(Gly) + AMP + diphosphate. This chain is Glycine--tRNA ligase beta subunit, found in Baumannia cicadellinicola subsp. Homalodisca coagulata.